The sequence spans 538 residues: Fructooligosaccharide ABC transporter substrate-binding protein FusA (538 aa).

A signal peptide spans M1 to A22. C23 is lipidated: N-palmitoyl cysteine. C23 carries the S-diacylglycerol cysteine lipid modification. E167 provides a ligand contact to substrate. Positions 215, 217, 219, 221, 223, and 224 each coordinate Ca(2+). Residue N235 participates in substrate binding. Residues D263, F264, D267, and N268 each coordinate Ca(2+). The substrate site is built by W314, N318, K353, W384, R419, and E423.

The protein belongs to the bacterial solute-binding protein 1 family. As to quaternary structure, the complex is composed of two ATP-binding proteins (MsmK), two transmembrane proteins (FusB and FusC) and a solute-binding protein (FusA).

It localises to the cell membrane. Its function is as follows. Part of the ABC transporter complex FusABC-MsmK involved in short- and long-chain fructooligosaccharide (FOS) import. Required for the utilization of long-chain FOSs. Binds kestose, nystose, fructofuranosyl-nystose and inulin, but not sucrose. Has a preference for long-chain FOSs (tetrasaccharides and larger). The protein is Fructooligosaccharide ABC transporter substrate-binding protein FusA of Streptococcus pneumoniae serotype 4 (strain ATCC BAA-334 / TIGR4).